The sequence spans 497 residues: L-arabinose isomerase (497 aa).

E306, E333, H349, and H448 together coordinate Mn(2+).

The protein belongs to the arabinose isomerase family. It depends on Mn(2+) as a cofactor.

It carries out the reaction beta-L-arabinopyranose = L-ribulose. Its pathway is carbohydrate degradation; L-arabinose degradation via L-ribulose; D-xylulose 5-phosphate from L-arabinose (bacterial route): step 1/3. Catalyzes the conversion of L-arabinose to L-ribulose. The polypeptide is L-arabinose isomerase (Vibrio parahaemolyticus serotype O3:K6 (strain RIMD 2210633)).